Here is a 231-residue protein sequence, read N- to C-terminus: MAKKGKKYQEAASKVDRTQYYSVEEAIKLAKETSVANFDASVEVAFRLGIDTRKNDQQIRGAVVLPHGTGKSQRVLVFAKGDKITEAEEAGADYVGEADYVQKIQQGWFDFDVVVATPDMMGEVGKLGRVLGPKGLMPNPKTGTVTMDVKKAVEEIKAGKVEYRAEKAGIVHASIGKVSFDEEKLVDNFRTLQDVLAKAKPASAKGTYFKSVAVTTTMGPGVKVDTSSFKL.

This sequence belongs to the universal ribosomal protein uL1 family. As to quaternary structure, part of the 50S ribosomal subunit.

Its function is as follows. Binds directly to 23S rRNA. The L1 stalk is quite mobile in the ribosome, and is involved in E site tRNA release. In terms of biological role, protein L1 is also a translational repressor protein, it controls the translation of the L11 operon by binding to its mRNA. This chain is Large ribosomal subunit protein uL1, found in Staphylococcus epidermidis (strain ATCC 35984 / DSM 28319 / BCRC 17069 / CCUG 31568 / BM 3577 / RP62A).